The sequence spans 89 residues: Putative regulatory protein CYA_2696 (89 aa).

The protein belongs to the RemA family.

This chain is Putative regulatory protein CYA_2696, found in Synechococcus sp. (strain JA-3-3Ab) (Cyanobacteria bacterium Yellowstone A-Prime).